Consider the following 165-residue polypeptide: Nucleotide-binding protein Rcas_1283 (165 aa).

Belongs to the YajQ family.

Its function is as follows. Nucleotide-binding protein. The polypeptide is Nucleotide-binding protein Rcas_1283 (Roseiflexus castenholzii (strain DSM 13941 / HLO8)).